We begin with the raw amino-acid sequence, 682 residues long: 1,4-alpha-glucan-branching enzyme (682 aa).

Residues tryptophan 88 and lysine 124 each contribute to the (1,4-alpha-D-glucosyl)n site. Aspartate 342 acts as the Nucleophile in catalysis. The Proton donor role is filled by glutamate 397.

This sequence belongs to the glycosyl hydrolase 13 family. GlgB subfamily.

Its subcellular location is the cytoplasm. It catalyses the reaction Transfers a segment of a (1-&gt;4)-alpha-D-glucan chain to a primary hydroxy group in a similar glucan chain.. It participates in glycan biosynthesis; glycogen biosynthesis. Glycogen-branching enzyme participates in the glycogen biosynthetic process along with glycogenin and glycogen synthase. Generates alpha-1,6-glucosidic branches from alpha-1,4-linked glucose chains, to increase solubility of the glycogen polymer. In Cryptococcus neoformans var. grubii serotype A (strain H99 / ATCC 208821 / CBS 10515 / FGSC 9487) (Filobasidiella neoformans var. grubii), this protein is 1,4-alpha-glucan-branching enzyme.